The chain runs to 463 residues: Hydroxyacid-oxoacid transhydrogenase, mitochondrial (463 aa).

It belongs to the iron-containing alcohol dehydrogenase family. Hydroxyacid-oxoacid transhydrogenase subfamily.

The protein localises to the mitochondrion. It carries out the reaction (S)-3-hydroxybutanoate + 2-oxoglutarate = (R)-2-hydroxyglutarate + acetoacetate. The enzyme catalyses 4-hydroxybutanoate + 2-oxoglutarate = (R)-2-hydroxyglutarate + succinate semialdehyde. Its function is as follows. Catalyzes the cofactor-independent reversible oxidation of gamma-hydroxybutyrate (GHB) to succinic semialdehyde (SSA) coupled to reduction of 2-ketoglutarate (2-KG) to D-2-hydroxyglutarate (D-2-HG). L-3-hydroxybutyrate (L-3-OHB) is also a substrate for HOT when using 2-KG as hydrogen acceptor, resulting in the formation of D-2-HG. The sequence is that of Hydroxyacid-oxoacid transhydrogenase, mitochondrial (adhfe1) from Xenopus laevis (African clawed frog).